Consider the following 71-residue polypeptide: Small ribosomal subunit protein eS17 (71 aa).

Belongs to the eukaryotic ribosomal protein eS17 family.

The sequence is that of Small ribosomal subunit protein eS17 from Pyrobaculum aerophilum (strain ATCC 51768 / DSM 7523 / JCM 9630 / CIP 104966 / NBRC 100827 / IM2).